Reading from the N-terminus, the 358-residue chain is Protein-glutamate methylesterase/protein-glutamine glutaminase 2 (358 aa).

The 118-residue stretch at 8-125 (RVLIVDDSAV…ARGLEGYAEE (118 aa)) folds into the Response regulatory domain. A 4-aspartylphosphate modification is found at D59. The CheB-type methylesterase domain maps to 157–352 (PMPGSALRFR…LDRVAERLLA (196 aa)). Catalysis depends on residues S177, H203, and D299.

Belongs to the CheB family. Post-translationally, phosphorylated by CheA. Phosphorylation of the N-terminal regulatory domain activates the methylesterase activity.

The protein resides in the cytoplasm. The catalysed reaction is [protein]-L-glutamate 5-O-methyl ester + H2O = L-glutamyl-[protein] + methanol + H(+). It carries out the reaction L-glutaminyl-[protein] + H2O = L-glutamyl-[protein] + NH4(+). Its function is as follows. Involved in chemotaxis. Part of a chemotaxis signal transduction system that modulates chemotaxis in response to various stimuli. Catalyzes the demethylation of specific methylglutamate residues introduced into the chemoreceptors (methyl-accepting chemotaxis proteins or MCP) by CheR. Also mediates the irreversible deamidation of specific glutamine residues to glutamic acid. The polypeptide is Protein-glutamate methylesterase/protein-glutamine glutaminase 2 (Xanthomonas oryzae pv. oryzae (strain MAFF 311018)).